A 360-amino-acid polypeptide reads, in one-letter code: Heme A synthase (360 aa).

Helical transmembrane passes span 29–49, 111–131, 139–159, 175–195, 210–230, 269–289, 309–329, and 330–350; these read WLFLMAALVVAMVAVGGATRL, FLGRLIGLCFFLPLGWFWWTG, LGLVGLGVLGGLQGAVGWIMV, LAAHLTLASAIFAGLVWLAAG, LTALLLPVATLLQIALGGLVA, VALVQLNHRLVAYALLALALL, ALAGLVAAQAMLGITTLLLAV, and PLWAGLAHQVTAMLVLGMAVA. Position 276 (His-276) interacts with heme. His-337 contributes to the heme binding site.

Belongs to the COX15/CtaA family. Type 2 subfamily. In terms of assembly, interacts with CtaB. Requires heme b as cofactor.

Its subcellular location is the cell membrane. It catalyses the reaction Fe(II)-heme o + 2 A + H2O = Fe(II)-heme a + 2 AH2. Its pathway is porphyrin-containing compound metabolism; heme A biosynthesis; heme A from heme O: step 1/1. Catalyzes the conversion of heme O to heme A by two successive hydroxylations of the methyl group at C8. The first hydroxylation forms heme I, the second hydroxylation results in an unstable dihydroxymethyl group, which spontaneously dehydrates, resulting in the formyl group of heme A. This Methylobacterium sp. (strain 4-46) protein is Heme A synthase.